Reading from the N-terminus, the 301-residue chain is Asialoglycoprotein receptor 2 (301 aa).

A disordered region spans residues 1 to 29 (MEKDFQDIQQLDSEENDHQLIGDEEQGSH). Residues 1–58 (MEKDFQDIQQLDSEENDHQLIGDEEQGSHVQNLRTENPRWGGQPPSRPFPQRLCSKFR) are Cytoplasmic-facing. Serine 13 carries the post-translational modification Phosphoserine. A lipid anchor (S-palmitoyl cysteine) is attached at cysteine 54. The helical; Signal-anchor for type II membrane protein transmembrane segment at 59 to 79 (LSLLALAFNILLLVVICVVSS) threads the bilayer. Residues 80–301 (QSMQLQKEFW…ACERKRDITY (222 aa)) are Extracellular-facing. 3 N-linked (GlcNAc...) asparagine glycosylation sites follow: asparagine 97, asparagine 119, and asparagine 165. A C-type lectin domain is found at 169–295 (CCPVNWVEFG…QQVNRWACER (127 aa)). 3 disulfide bridges follow: cysteine 170-cysteine 181, cysteine 198-cysteine 293, and cysteine 271-cysteine 285.

In terms of assembly, interacts with LASS2. As to expression, expressed exclusively in hepatic parenchymal cells.

Its subcellular location is the membrane. Mediates the endocytosis of plasma glycoproteins to which the terminal sialic acid residue on their complex carbohydrate moieties has been removed. The receptor recognizes terminal galactose and N-acetylgalactosamine units. After ligand binding to the receptor, the resulting complex is internalized and transported to a sorting organelle, where receptor and ligand are disassociated. The receptor then returns to the cell membrane surface. In Rattus norvegicus (Rat), this protein is Asialoglycoprotein receptor 2 (Asgr2).